The sequence spans 92 residues: Small ribosomal subunit protein uS19 (92 aa).

The protein belongs to the universal ribosomal protein uS19 family.

Functionally, protein S19 forms a complex with S13 that binds strongly to the 16S ribosomal RNA. The sequence is that of Small ribosomal subunit protein uS19 from Rickettsia bellii (strain OSU 85-389).